The sequence spans 850 residues: Translation initiation factor IF-2 (850 aa).

Disordered stretches follow at residues Leu50 to Ser72 and Phe92 to Val267. Residues Ser96 to Arg135 are compositionally biased toward basic and acidic residues. The span at Arg136–Asp172 shows a compositional bias: low complexity. Basic and acidic residues-rich tracts occupy residues Ala173 to Ala210 and Thr234 to Arg243. A compositionally biased stretch (basic residues) spans Arg244–Gln257. The tr-type G domain maps to Ser350–Glu517. Positions Gly359–Thr366 are G1. Residue Gly359–Thr366 coordinates GTP. The tract at residues Gly384–His388 is G2. The tract at residues Asp405–Gly408 is G3. Residues Asp405–His409 and Asn459–Asp462 each bind GTP. The interval Asn459–Asp462 is G4. Positions Ser495–Lys497 are G5.

It belongs to the TRAFAC class translation factor GTPase superfamily. Classic translation factor GTPase family. IF-2 subfamily.

It is found in the cytoplasm. Functionally, one of the essential components for the initiation of protein synthesis. Protects formylmethionyl-tRNA from spontaneous hydrolysis and promotes its binding to the 30S ribosomal subunits. Also involved in the hydrolysis of GTP during the formation of the 70S ribosomal complex. The protein is Translation initiation factor IF-2 of Pseudomonas entomophila (strain L48).